A 360-amino-acid polypeptide reads, in one-letter code: Glutaminyl-peptide cyclotransferase (360 aa).

An N-terminal signal peptide occupies residues 1-23 (MKYLKILIIVTIFFFLLINVINC). An N-linked (GlcNAc...) asparagine glycan is attached at asparagine 135. Aspartate 165 is a binding site for Zn(2+). Residue glutamate 199 is the Proton acceptor of the active site. Glutamate 200 serves as a coordination point for Zn(2+). The Proton acceptor role is filled by aspartate 251. Histidine 330 contributes to the Zn(2+) binding site.

This sequence belongs to the glutaminyl-peptide cyclotransferase family.

The protein localises to the secreted. The catalysed reaction is N-terminal L-glutaminyl-[peptide] = N-terminal 5-oxo-L-prolyl-[peptide] + NH4(+). In terms of biological role, responsible for the biosynthesis of pyroglutamyl peptides. Has a bias against acidic and tryptophan residues adjacent to the N-terminal glutaminyl residue and a lack of importance of chain length after the second residue. Also catalyzes N-terminal pyroglutamate formation. In Dictyostelium discoideum (Social amoeba), this protein is Glutaminyl-peptide cyclotransferase (qpct).